Consider the following 765-residue polypeptide: Transient receptor potential cation channel subfamily V member 6 (765 aa).

The Cytoplasmic segment spans residues 1-367; the sequence is MGPLQGDGGP…SLKWKRYGRP (367 aa). 3 ANK repeats span residues 84-114, 118-147, and 156-185; these read IWES…KVHQ, MGET…ELVF, and EGQT…SVSA. The interval 133 to 143 is interaction with calmodulin; sequence EAAMVLMEAAP. The residue at position 201 (Y201) is a Phosphotyrosine; by SRC. ANK repeat units follow at residues 202 to 231, 235 to 277, and 279 to 308; these read FGEH…DIRA, LGNT…LVPN, and QGLT…HTQW. Residues 368–388 traverse the membrane as a helical segment; that stretch reads YFCMLGAIYLLYIICFTMCCI. Over 389 to 425 the chain is Extracellular; it reads YRPLKPRTNNRTSPRDNTLLQQKLLQEAYMTPKDDIR. N398 carries an N-linked (GlcNAc...) asparagine glycan. A helical transmembrane segment spans residues 426-448; it reads LVGELVTVIGAIIILLVEVPDIF. Residues 449 to 463 lie on the Cytoplasmic side of the membrane; sequence RMGVTRFFGQTILGG. A helical transmembrane segment spans residues 464 to 483; the sequence is PFHVLIITYAFMVLVTMVMR. Topologically, residues 484–489 are extracellular; the sequence is LISASG. Residues 490 to 509 form a helical membrane-spanning segment; it reads EVVPMSFALVLGWCNVMYFA. At 510-529 the chain is on the cytoplasmic side; the sequence is RGFQMLGPFTIMIQKMIFGD. The helical transmembrane segment at 530 to 552 threads the bilayer; that stretch reads LMRFCWLMAVVILGFASAFYIIF. Topologically, residues 553 to 565 are extracellular; sequence QTEDPEELGHFYD. The segment at residues 566 to 585 is an intramembrane region (pore-forming); it reads YPMALFSTFELFLTIIDGPA. The short motif at 581-585 is the Selectivity filter element; the sequence is IDGPA. D582 provides a ligand contact to Ca(2+). The Extracellular segment spans residues 586–596; it reads NYNVDLPFMYS. Residues 597–617 form a helical membrane-spanning segment; it reads ITYAAFAIIATLLMLNLLIAM. Over 618 to 765 the chain is Cytoplasmic; the sequence is MGDTHWRVAH…EDGESWEYQI (148 aa). An interaction with S100A10 region spans residues 638-642; that stretch reads VATTV. Residues 731 to 751 are interaction with calmodulin; the sequence is SSANWERLRQGTLRRDLRGII. T742 is modified (phosphothreonine; by PKC/PRKCA).

This sequence belongs to the transient receptor (TC 1.A.4) family. TrpV subfamily. TRPV6 sub-subfamily. In terms of assembly, homotetramer. Probably also forms heterotetramers with TRPV5. Interacts with TRPV5. Interacts with S100A10 and probably with the ANAX2-S100A10 heterotetramer. The interaction with S100A10 is required for the trafficking to the plasma membrane. Interacts with BSPRY. Interacts with TCAF1 and TCAF2 isoform 2. Interacts with calmodulin. In terms of processing, glycosylated. Phosphorylation at Tyr-201 by SRC leads to an increased calcium influx through the channel. Probably dephosphorylated at this site by PTPN1. Phosphorylation by PRKCA at the calmodulin binding site delays channel inactivation. Expressed at high levels in the gastrointestinal tract, including esophagus, stomach, duodenum, jejunum, ileum and colon, and in pancreas, placenta, prostate and salivary gland. Expressed at moderate levels in liver, kidney and testis. Expressed in trophoblasts of placenta villus trees (at protein level). Expressed in locally advanced prostate cancer, metastatic and androgen-insensitive prostatic lesions but not detected in healthy prostate tissue and benign prostatic hyperplasia.

Its subcellular location is the cell membrane. The enzyme catalyses Ca(2+)(in) = Ca(2+)(out). Calcium selective cation channel that mediates Ca(2+) uptake in various tissues, including the intestine. Important for normal Ca(2+) ion homeostasis in the body, including bone and skin. The channel is activated by low internal calcium level, probably including intracellular calcium store depletion, and the current exhibits an inward rectification. Inactivation includes both a rapid Ca(2+)-dependent and a slower Ca(2+)-calmodulin-dependent mechanism; the latter may be regulated by phosphorylation. In vitro, is slowly inhibited by Mg(2+) in a voltage-independent manner. Heteromeric assembly with TRPV5 seems to modify channel properties. TRPV5-TRPV6 heteromultimeric concatemers exhibit voltage-dependent gating. The protein is Transient receptor potential cation channel subfamily V member 6 (TRPV6) of Homo sapiens (Human).